The sequence spans 285 residues: Acetyl-coenzyme A carboxylase carboxyl transferase subunit beta (285 aa).

The CoA carboxyltransferase N-terminal domain maps to 24 to 285 (GLWYKSPTGK…DLIQNQPVRA (262 aa)).

This sequence belongs to the AccD/PCCB family. As to quaternary structure, acetyl-CoA carboxylase is a heterohexamer composed of biotin carboxyl carrier protein (AccB), biotin carboxylase (AccC) and two subunits each of ACCase subunit alpha (AccA) and ACCase subunit beta (AccD).

The protein resides in the cytoplasm. The catalysed reaction is N(6)-carboxybiotinyl-L-lysyl-[protein] + acetyl-CoA = N(6)-biotinyl-L-lysyl-[protein] + malonyl-CoA. It participates in lipid metabolism; malonyl-CoA biosynthesis; malonyl-CoA from acetyl-CoA: step 1/1. Its function is as follows. Component of the acetyl coenzyme A carboxylase (ACC) complex. Biotin carboxylase (BC) catalyzes the carboxylation of biotin on its carrier protein (BCCP) and then the CO(2) group is transferred by the transcarboxylase to acetyl-CoA to form malonyl-CoA. The sequence is that of Acetyl-coenzyme A carboxylase carboxyl transferase subunit beta from Christiangramia forsetii (strain DSM 17595 / CGMCC 1.15422 / KT0803) (Gramella forsetii).